A 189-amino-acid chain; its full sequence is MIDDITAQLRAGRQVLEALERELAGRIASFAELLADSLAGGRKLLVMGNGGSAADAQHFAAEIVGRFKLERRGLPAVALTTDTSILTAIGNDYGFDAIFRRQVEALADEGDVVVGISTSGNSRNVQEALLLARERGCRTIGLLGRDGGSIRDIVDLDLTVPSADTPRIQEGHITIIHIVCDLVEKRLFP.

One can recognise an SIS domain in the interval 34–189 (LADSLAGGRK…CDLVEKRLFP (156 aa)). 49–51 (NGG) is a substrate binding site. Zn(2+) contacts are provided by His-58 and Glu-62. Substrate contacts are provided by residues Glu-62, 91-92 (ND), 117-119 (STS), Ser-122, and Gln-169. Residues Gln-169 and His-177 each contribute to the Zn(2+) site.

The protein belongs to the SIS family. GmhA subfamily. As to quaternary structure, homotetramer. It depends on Zn(2+) as a cofactor.

The protein resides in the cytoplasm. It catalyses the reaction 2 D-sedoheptulose 7-phosphate = D-glycero-alpha-D-manno-heptose 7-phosphate + D-glycero-beta-D-manno-heptose 7-phosphate. The protein operates within carbohydrate biosynthesis; D-glycero-D-manno-heptose 7-phosphate biosynthesis; D-glycero-alpha-D-manno-heptose 7-phosphate and D-glycero-beta-D-manno-heptose 7-phosphate from sedoheptulose 7-phosphate: step 1/1. In terms of biological role, catalyzes the isomerization of sedoheptulose 7-phosphate in D-glycero-D-manno-heptose 7-phosphate. This is Phosphoheptose isomerase from Geobacter sulfurreducens (strain ATCC 51573 / DSM 12127 / PCA).